Reading from the N-terminus, the 685-residue chain is MPSISMMSDAITPETLKKEKKMKSETLDSDDTVVKKEKSSSKKKEKSSSSGKKDKEEKEKKKKRKAVDLDDSSDKSDNSSELVQADDLKPKKAKVMEEAVVEAEDPNSLSNFRISKPLKDVLISKGIKALFPIQAMTFDNVIDGCDLVGRARTGQGKTLAFVLPIVESLVNGRTKDLRRSGHGRLPSVLVLLPTRELATQVLADFQVYGGAVGLTACSVYGGAPFHSQISSLTRGVDIVVGTPGRVKDLLEKGVLKLGSLLFRVLDEADEMLKMGFVDDVELILGKVDHVSKVQTLLFSATLPSWVKQISTRFLKSAKKTVDLVSDQKMKASISVRHIVIPCSASARPDLIPDIIRCYGSGGRSIIFTETKESASQLAGLLTGARPLHGDIQQTQREVTLKGFRTGKFMTLVATNVAARGLDINDVQLIIQCEPPRDVEDYIHRSGRTGRAGNTGVAVMLYDPKRSSVTKIERESGVKFEHLSAPQPVDVAKAVGIEAAAAILQISDSVIPAFKDAAEELLSTSGLSAVDILSKALAKAAGYSDIKERSLLTGMEGYVTLLLDAGRPFYGQSFAYTVLKRFLPATKADSIMGVALTADKSGAVFDVPVDDLETFLVGAENAAGVNLDVVKALPPLEEKVQISRRFGGGGRGGRGGGYGGRGGGYGGGGYGGGGGYGGRGGGYGRR.

Positions 1 to 89 (MPSISMMSDA…SELVQADDLK (89 aa)) are disordered. Composition is skewed to basic and acidic residues over residues 22-42 (MKSE…SSSK) and 66-78 (AVDL…KSDN). Residues 107-135 (NSLSNFRISKPLKDVLISKGIKALFPIQA) carry the Q motif motif. Positions 138 to 320 (FDNVIDGCDL…TRFLKSAKKT (183 aa)) constitute a Helicase ATP-binding domain. 151 to 158 (ARTGQGKT) provides a ligand contact to ATP. A DEAD box motif is present at residues 266–269 (DEAD). Residues 349-491 (DLIPDIIRCY…LSAPQPVDVA (143 aa)) enclose the Helicase C-terminal domain.

This sequence belongs to the DEAD box helicase family. DDX21/DDX50 subfamily.

Its subcellular location is the nucleus. It catalyses the reaction ATP + H2O = ADP + phosphate + H(+). This chain is DEAD-box ATP-dependent RNA helicase 7 (RH7), found in Spinacia oleracea (Spinach).